The following is a 220-amino-acid chain: UPF0319 protein YccT (220 aa).

An N-terminal signal peptide occupies residues 1–20; it reads MKTGALTTFLALCLPVTVFA.

This sequence belongs to the UPF0319 family.

The polypeptide is UPF0319 protein YccT (Salmonella dublin (strain CT_02021853)).